The primary structure comprises 555 residues: Dimethylaniline monooxygenase [N-oxide-forming] 4 (555 aa).

Residues 9-13, E32, and 40-41 contribute to the FAD site; these read GAGVS and LW. NADP(+) is bound by residues 60 to 61 and 195 to 198; these read TN and SGGD. Residues 515-532 traverse the membrane as a helical segment; it reads YLKVWGAPLLLASVLLIC.

This sequence belongs to the FMO family. FAD serves as cofactor. As to expression, kidney and liver.

It is found in the microsome membrane. Its subcellular location is the endoplasmic reticulum membrane. It catalyses the reaction N,N-dimethylaniline + NADPH + O2 + H(+) = N,N-dimethylaniline N-oxide + NADP(+) + H2O. This protein is involved in the oxidative metabolism of a variety of xenobiotics such as drugs and pesticides. The sequence is that of Dimethylaniline monooxygenase [N-oxide-forming] 4 (FMO4) from Oryctolagus cuniculus (Rabbit).